Here is a 281-residue protein sequence, read N- to C-terminus: uncharacterized protein (281 aa).

Disordered regions lie at residues 192–212 and 227–281; these read SNSSVNLSMDKKSDDSKIQET and EDYV…SEEY. Positions 200–211 are enriched in basic and acidic residues; sequence MDKKSDDSKIQE. Composition is skewed to acidic residues over residues 227–240 and 249–260; these read EDYVDGNEDCISDN and DTDSDLGDLEDP.

It belongs to the cullin family.

This is an uncharacterized protein from Acanthamoeba polyphaga (Amoeba).